Reading from the N-terminus, the 334-residue chain is O-methyltransferase SfmM3 (334 aa).

S-adenosyl-L-methionine contacts are provided by residues Asp-190 and 216–218 (GDF). The Proton acceptor role is filled by His-236.

It belongs to the class I-like SAM-binding methyltransferase superfamily. Cation-independent O-methyltransferase family. COMT subfamily.

The enzyme catalyses 5-hydroxy-3-methyl-L-tyrosine + S-adenosyl-L-methionine = 5-hydroxy-3-methyl-O-methyl-L-tyrosine + S-adenosyl-L-homocysteine + H(+). It functions in the pathway antibiotic biosynthesis. In terms of biological role, O-methyltransferase that mediates the methylation of 3-hydroxy-5-methyl-L-tyrosine (3-OH-5-Me-Tyr) into 3-hydroxy-5-methyl-O-methyltyrosine (3-OH-5-Me-OMe-Tyr), a core structure of saframycin A, a potent antitumor antibiotic that belongs to the tetrahydroisoquinoline family. This chain is O-methyltransferase SfmM3, found in Streptomyces lavendulae.